A 65-amino-acid polypeptide reads, in one-letter code: Small ribosomal subunit protein bS21B (65 aa).

It belongs to the bacterial ribosomal protein bS21 family.

The chain is Small ribosomal subunit protein bS21B from Francisella tularensis subsp. holarctica (strain LVS).